Reading from the N-terminus, the 418-residue chain is 3-isopropylmalate dehydratase large subunit 1 (418 aa).

[4Fe-4S] cluster is bound by residues cysteine 298, cysteine 358, and cysteine 361.

This sequence belongs to the aconitase/IPM isomerase family. LeuC type 2 subfamily. Heterodimer of LeuC and LeuD. It depends on [4Fe-4S] cluster as a cofactor.

It carries out the reaction (2R,3S)-3-isopropylmalate = (2S)-2-isopropylmalate. The protein operates within amino-acid biosynthesis; L-leucine biosynthesis; L-leucine from 3-methyl-2-oxobutanoate: step 2/4. Functionally, catalyzes the isomerization between 2-isopropylmalate and 3-isopropylmalate, via the formation of 2-isopropylmaleate. In Thermotoga maritima (strain ATCC 43589 / DSM 3109 / JCM 10099 / NBRC 100826 / MSB8), this protein is 3-isopropylmalate dehydratase large subunit 1.